We begin with the raw amino-acid sequence, 398 residues long: Acetate kinase (398 aa).

Asparagine 9 provides a ligand contact to Mg(2+). An ATP-binding site is contributed by lysine 16. Position 90 (arginine 90) interacts with substrate. Aspartate 147 acts as the Proton donor/acceptor in catalysis. ATP-binding positions include 207-211, 282-284, and 330-334; these read HIGNG, DLR, and GVGEN. Glutamate 384 contributes to the Mg(2+) binding site.

This sequence belongs to the acetokinase family. In terms of assembly, homodimer. It depends on Mg(2+) as a cofactor. Mn(2+) serves as cofactor.

It localises to the cytoplasm. The enzyme catalyses acetate + ATP = acetyl phosphate + ADP. It functions in the pathway metabolic intermediate biosynthesis; acetyl-CoA biosynthesis; acetyl-CoA from acetate: step 1/2. Catalyzes the formation of acetyl phosphate from acetate and ATP. Can also catalyze the reverse reaction. The chain is Acetate kinase from Staphylococcus carnosus (strain TM300).